Reading from the N-terminus, the 382-residue chain is Ustilagic acid biosynthesis cluster protein orf2 (382 aa).

A compositionally biased stretch (polar residues) spans 1–20 (MLQEAKVSTHTSNPLSQSVP). Residues 1 to 22 (MLQEAKVSTHTSNPLSQSVPQY) form a disordered region.

The protein operates within secondary metabolite biosynthesis. Part of the gene cluster that mediates the biosynthesis of the glycolipid biosurfactant ustilagic acid (UA). UA is a secreted cellobiose glycolipid that is toxic for many microorganisms and confers biocontrol activity to U.maydis. UA consists of 15,16-dihydroxypalmitic or 2,15,16-trihydroxypalmitic acid, which is O-glycosidically linked to cellobiose at its terminal hydroxyl group. In addition, the cellobiose moiety is acetylated and acylated with a short-chain hydroxy fatty acid. UA biosynthesis starts with omega-hydroxylation of palmitic acid catalyzed by the cytochrome P450 monooxygenase cyp1. Terminal hydroxylation of palmitic acid precedes subterminal hydroxylation catalyzed by the cytochrome P450 monooxygenase cyp2. Sequential glucosylation of the hydroxy fatty acid is probably catalyzed by the glycosyltransferase ugt1. The cellobiose lipid is further decorated by acetylation of the proximal glucose residue and by acylation with a short-chain beta-hydroxy fatty acid at the distal glucose residue. The acyltransferase uat1 may be a good candidate for catalyzing either acetylation or acylation of the cellobiose lipid. The fatty acid synthase fas2 may be involved in synthesis of the carbon backbone of the short-chain beta-hydroxy fatty acid esterified to the cellobiose disaccharide. The secreted UA consists of a mixture of both alpha-hydroxylated and non-hydroxylated glycolipids; therefore, alpha-hydroxylation of the long-chain fatty, catalyzed by the fatty acid hydroxylase ahd1, occurs late in UA biosynthesis and may be the last step before secretion. The chain is Ustilagic acid biosynthesis cluster protein orf2 from Mycosarcoma maydis (Corn smut fungus).